The primary structure comprises 254 residues: Photosystem II 22 kDa protein 2, chloroplastic (254 aa).

Residues 1–38 (MALQQSMAMPMMVVSGLGTAPRSSPMVQLQRMKKHLVV) constitute a chloroplast transit peptide. 2 repeat units span residues 42 to 148 (FKSR…FVDD) and 149 to 253 (ATGL…DNDD). The next 4 membrane-spanning stretches (helical) occupy residues 86–106 (VAML…KGIL), 120–140 (AEPL…GALG), 184–204 (LFVG…EIIT), and 219–239 (PINE…FAAI).

It belongs to the ELIP/psbS family.

The protein localises to the plastid. The protein resides in the chloroplast thylakoid membrane. Its function is as follows. Involved in high light-mediated energy-dependent nonphotochemical quenching (NPQ, qE) and thermal dissipation (TD) thus regulating energy conversion in photosystem II and protecting from photoinhibition. Also seems to regulate quantum yield of electron transport in fluctuating light conditions. This is Photosystem II 22 kDa protein 2, chloroplastic from Oryza sativa subsp. indica (Rice).